The chain runs to 209 residues: Ribosomal RNA large subunit methyltransferase E (209 aa).

Gly-63, Trp-65, Asp-83, Asp-99, and Asp-124 together coordinate S-adenosyl-L-methionine. The active-site Proton acceptor is Lys-164.

This sequence belongs to the class I-like SAM-binding methyltransferase superfamily. RNA methyltransferase RlmE family.

The protein localises to the cytoplasm. It carries out the reaction uridine(2552) in 23S rRNA + S-adenosyl-L-methionine = 2'-O-methyluridine(2552) in 23S rRNA + S-adenosyl-L-homocysteine + H(+). Functionally, specifically methylates the uridine in position 2552 of 23S rRNA at the 2'-O position of the ribose in the fully assembled 50S ribosomal subunit. This is Ribosomal RNA large subunit methyltransferase E from Vibrio campbellii (strain ATCC BAA-1116).